Here is a 217-residue protein sequence, read N- to C-terminus: ATP-dependent Clp protease proteolytic subunit (217 aa).

Catalysis depends on Ser121, which acts as the Nucleophile. His146 is an active-site residue.

It belongs to the peptidase S14 family. Fourteen ClpP subunits assemble into 2 heptameric rings which stack back to back to give a disk-like structure with a central cavity, resembling the structure of eukaryotic proteasomes.

It is found in the cytoplasm. The catalysed reaction is Hydrolysis of proteins to small peptides in the presence of ATP and magnesium. alpha-casein is the usual test substrate. In the absence of ATP, only oligopeptides shorter than five residues are hydrolyzed (such as succinyl-Leu-Tyr-|-NHMec, and Leu-Tyr-Leu-|-Tyr-Trp, in which cleavage of the -Tyr-|-Leu- and -Tyr-|-Trp bonds also occurs).. Its function is as follows. Cleaves peptides in various proteins in a process that requires ATP hydrolysis. Has a chymotrypsin-like activity. Plays a major role in the degradation of misfolded proteins. This Burkholderia mallei (strain NCTC 10247) protein is ATP-dependent Clp protease proteolytic subunit.